The following is a 555-amino-acid chain: Dihydroxy-acid dehydratase (555 aa).

D80 is a binding site for Mg(2+). Position 121 (C121) interacts with [2Fe-2S] cluster. Residues D122 and K123 each contribute to the Mg(2+) site. N6-carboxylysine is present on K123. C193 contacts [2Fe-2S] cluster. E444 contributes to the Mg(2+) binding site. S470 acts as the Proton acceptor in catalysis.

This sequence belongs to the IlvD/Edd family. In terms of assembly, homodimer. It depends on [2Fe-2S] cluster as a cofactor. Requires Mg(2+) as cofactor.

The enzyme catalyses (2R)-2,3-dihydroxy-3-methylbutanoate = 3-methyl-2-oxobutanoate + H2O. The catalysed reaction is (2R,3R)-2,3-dihydroxy-3-methylpentanoate = (S)-3-methyl-2-oxopentanoate + H2O. It participates in amino-acid biosynthesis; L-isoleucine biosynthesis; L-isoleucine from 2-oxobutanoate: step 3/4. It functions in the pathway amino-acid biosynthesis; L-valine biosynthesis; L-valine from pyruvate: step 3/4. Its function is as follows. Functions in the biosynthesis of branched-chain amino acids. Catalyzes the dehydration of (2R,3R)-2,3-dihydroxy-3-methylpentanoate (2,3-dihydroxy-3-methylvalerate) into 2-oxo-3-methylpentanoate (2-oxo-3-methylvalerate) and of (2R)-2,3-dihydroxy-3-methylbutanoate (2,3-dihydroxyisovalerate) into 2-oxo-3-methylbutanoate (2-oxoisovalerate), the penultimate precursor to L-isoleucine and L-valine, respectively. The sequence is that of Dihydroxy-acid dehydratase from Aquifex aeolicus (strain VF5).